Here is a 223-residue protein sequence, read N- to C-terminus: Urease accessory protein UreF (223 aa).

This sequence belongs to the UreF family. In terms of assembly, ureD, UreF and UreG form a complex that acts as a GTP-hydrolysis-dependent molecular chaperone, activating the urease apoprotein by helping to assemble the nickel containing metallocenter of UreC. The UreE protein probably delivers the nickel.

Its subcellular location is the cytoplasm. Functionally, required for maturation of urease via the functional incorporation of the urease nickel metallocenter. The sequence is that of Urease accessory protein UreF from Rhizobium leguminosarum bv. trifolii (strain WSM2304).